A 348-amino-acid polypeptide reads, in one-letter code: VIP36-like protein (348 aa).

Residues 1–38 (MAVALGPSGWWQRWRRRLSAREVSRMLLLLLLLGSGQG) form the signal peptide. Residues 39–313 (PRQVGAGQTF…APLPPLSGLA (275 aa)) are Lumenal-facing. Residues 49–274 (EYLKREHSLS…DVISLKLFEL (226 aa)) form the L-type lectin-like domain. A carbohydrate is bound by residues S93 and D128. The Ca(2+) site is built by D159, Y161, and N163. A carbohydrate is bound by residues Y161 and N163. The N-linked (GlcNAc...) asparagine glycan is linked to N181. An a carbohydrate-binding site is contributed by H188. D191 is a binding site for Ca(2+). C200 and C237 are disulfide-bonded. Residue 258 to 260 (GDL) coordinates a carbohydrate. A helical transmembrane segment spans residues 314 to 334 (LFLIVFFSLVFSVFAIVIGII). The Cytoplasmic portion of the chain corresponds to 335–348 (LYNKWQDQSRKRFY). An Endoplasmic reticulum retention signal motif is present at residues 344–346 (RKR).

It localises to the endoplasmic reticulum membrane. It is found in the golgi apparatus membrane. In terms of biological role, may be involved in the regulation of export from the endoplasmic reticulum of a subset of glycoproteins. May function as a regulator of ERGIC-53. The chain is VIP36-like protein (LMAN2L) from Bos taurus (Bovine).